We begin with the raw amino-acid sequence, 150 residues long: Cytochrome b5 type B (150 aa).

Positions 1-15 (MSGSMATAEASGSDG) are excised as a propeptide. Positions 1–21 (MSGSMATAEASGSDGKGQEVE) are disordered. Ser23 carries the phosphoserine modification. The 77-residue stretch at 24-100 (VTYYRMEEVA…LKQYYIGDIH (77 aa)) folds into the Cytochrome b5 heme-binding domain. Lys34 is modified (N6-acetyllysine). Position 37 is a phosphoserine (Ser37). Residue Lys39 is modified to N6-methyllysine. Residues His59 and His83 each contribute to the heme site. Ser84 is subject to Phosphoserine. Residues 122–144 (CWAYWILPIIGAVLLGFLYRYYT) traverse the membrane as a helical segment.

It belongs to the cytochrome b5 family. In terms of assembly, component of a complex composed of cytochrome b5, NADH-cytochrome b5 reductase (CYB5R3) and MTARC2.

The protein resides in the mitochondrion outer membrane. In terms of biological role, cytochrome b5 is a membrane-bound hemoprotein functioning as an electron carrier for several membrane-bound oxygenases. The sequence is that of Cytochrome b5 type B (CYB5B) from Pongo abelii (Sumatran orangutan).